A 294-amino-acid polypeptide reads, in one-letter code: MSDYLIKALAYDGMARVYAAVTTETIKEAQRRHDTWSVSSAALGRTMTGTLFLGAMQKEDQKITVKIEGDGPIGPIVADSNAQGQIRGFVTNPHVHFSELNEAGKLDVRRGVGTSGMLSVVKDLGFGENFTGQTPIVSGEIGEDFTYYLATSEQVNSSVGVGVLVNPDDTIEAAGGFMLQLLPGATDEIIDEIEKNLTALPTVSRMIEAGETPESILAKLAGGEDKLQILEKIPVSFECNCSKERFGSAIISLGKDEIRSMIEEDHGAEAECHFCRNTYDFSEEELEKLYEEAK.

Intrachain disulfides connect Cys-239-Cys-241 and Cys-272-Cys-275.

The protein belongs to the HSP33 family. Post-translationally, under oxidizing conditions two disulfide bonds are formed involving the reactive cysteines. Under reducing conditions zinc is bound to the reactive cysteines and the protein is inactive.

Its subcellular location is the cytoplasm. Functionally, redox regulated molecular chaperone. Protects both thermally unfolding and oxidatively damaged proteins from irreversible aggregation. Plays an important role in the bacterial defense system toward oxidative stress. This is 33 kDa chaperonin from Listeria welshimeri serovar 6b (strain ATCC 35897 / DSM 20650 / CCUG 15529 / CIP 8149 / NCTC 11857 / SLCC 5334 / V8).